Consider the following 797-residue polypeptide: Ubiquitin carboxyl-terminal hydrolase 14 (797 aa).

Residues 156 to 266 form a UBP-type; degenerate zinc finger; that stretch reads LISEHALTLQ…EHLAHFGIDF (111 aa). Zn(2+)-binding residues include C180, C183, C200, and H213. Residues 308-796 enclose the USP domain; it reads TGLVNLGNSC…MGYVYFFQRL (489 aa). Catalysis depends on C317, which acts as the Nucleophile. 2 consecutive UBA domains span residues 613–654 and 670–710; these read VANE…LLSH and DIDQ…VFNN. The Proton acceptor role is filled by H758.

This sequence belongs to the peptidase C19 family. In terms of tissue distribution, constitutively and ubiquitously expressed (at protein level).

It catalyses the reaction Thiol-dependent hydrolysis of ester, thioester, amide, peptide and isopeptide bonds formed by the C-terminal Gly of ubiquitin (a 76-residue protein attached to proteins as an intracellular targeting signal).. In terms of biological role, recognizes and hydrolyzes the peptide bond at the C-terminal Gly of ubiquitin. Involved in the processing of poly-ubiquitin precursors as well as that of ubiquitinated proteins. Involved in seed and embryo development. In Arabidopsis thaliana (Mouse-ear cress), this protein is Ubiquitin carboxyl-terminal hydrolase 14 (UBP14).